Here is a 180-residue protein sequence, read N- to C-terminus: ATP-dependent protease subunit HslV (180 aa).

Residue Thr7 is part of the active site. Gly165, Cys168, and Thr171 together coordinate Na(+).

Belongs to the peptidase T1B family. HslV subfamily. In terms of assembly, a double ring-shaped homohexamer of HslV is capped on each side by a ring-shaped HslU homohexamer. The assembly of the HslU/HslV complex is dependent on binding of ATP.

Its subcellular location is the cytoplasm. The enzyme catalyses ATP-dependent cleavage of peptide bonds with broad specificity.. With respect to regulation, allosterically activated by HslU binding. Its function is as follows. Protease subunit of a proteasome-like degradation complex believed to be a general protein degrading machinery. The sequence is that of ATP-dependent protease subunit HslV from Bacillus cereus (strain Q1).